We begin with the raw amino-acid sequence, 102 residues long: Small ribosomal subunit protein uS14 (102 aa).

It belongs to the universal ribosomal protein uS14 family. As to quaternary structure, part of the 30S ribosomal subunit. Contacts proteins S3 and S10.

Functionally, binds 16S rRNA, required for the assembly of 30S particles and may also be responsible for determining the conformation of the 16S rRNA at the A site. The sequence is that of Small ribosomal subunit protein uS14 from Ehrlichia ruminantium (strain Gardel).